Reading from the N-terminus, the 154-residue chain is Urease accessory protein UreE (154 aa).

The disordered stretch occupies residues 135 to 154 (YGHGRTFGHDHGHAHDHHHA).

The protein belongs to the UreE family.

It localises to the cytoplasm. Its function is as follows. Involved in urease metallocenter assembly. Binds nickel. Probably functions as a nickel donor during metallocenter assembly. The sequence is that of Urease accessory protein UreE from Paracoccus denitrificans (strain Pd 1222).